The sequence spans 304 residues: tRNA uridine(34) hydroxylase (304 aa).

One can recognise a Rhodanese domain in the interval 124–219 (QDEETLLIDT…YLETIPKEDS (96 aa)). Residue C179 is the Cysteine persulfide intermediate of the active site.

Belongs to the TrhO family.

It carries out the reaction uridine(34) in tRNA + AH2 + O2 = 5-hydroxyuridine(34) in tRNA + A + H2O. In terms of biological role, catalyzes oxygen-dependent 5-hydroxyuridine (ho5U) modification at position 34 in tRNAs. The chain is tRNA uridine(34) hydroxylase from Bartonella henselae (strain ATCC 49882 / DSM 28221 / CCUG 30454 / Houston 1) (Rochalimaea henselae).